We begin with the raw amino-acid sequence, 249 residues long: Probable phosphoglycerate mutase (249 aa).

Substrate contacts are provided by residues arginine 9–asparagine 16, threonine 22–glycine 23, arginine 61, glutamate 88–tyrosine 91, lysine 99, arginine 115–arginine 116, and glycine 184–asparagine 185. The active-site Tele-phosphohistidine intermediate is the histidine 10. Catalysis depends on glutamate 88, which acts as the Proton donor/acceptor.

Belongs to the phosphoglycerate mutase family. BPG-dependent PGAM subfamily. In terms of assembly, homodimer.

The enzyme catalyses (2R)-2-phosphoglycerate = (2R)-3-phosphoglycerate. It carries out the reaction (2R)-3-phospho-glyceroyl phosphate = (2R)-2,3-bisphosphoglycerate + H(+). Functionally, catalyzes the interconversion of 2-phosphoglycerate and 3-phosphoglycerate. The protein is Probable phosphoglycerate mutase (gpmA) of Dictyostelium discoideum (Social amoeba).